The sequence spans 673 residues: UvrABC system protein B (673 aa).

The 160-residue stretch at 29–188 folds into the Helicase ATP-binding domain; it reads EGLNDGLAHQ…LAELQYTRND (160 aa). Position 42–49 (42–49) interacts with ATP; it reads GVTGSGKT. The short motif at 95 to 118 is the Beta-hairpin element; the sequence is YYDYYQPEAYVPSSDTFIEKDASI. Residues 434–600 form the Helicase C-terminal domain; sequence QVDDVLSEIH…ALNKKVGELL (167 aa). The tract at residues 607 to 632 is disordered; that stretch reads KPKRGKQAVKVEEKSANTYKPKSRKE. One can recognise a UVR domain in the interval 634 to 669; that stretch reads EKELKQLEQQMRDFAKDLEFEKAAAVRDKIGQLKAV.

It belongs to the UvrB family. In terms of assembly, forms a heterotetramer with UvrA during the search for lesions. Interacts with UvrC in an incision complex.

The protein resides in the cytoplasm. Functionally, the UvrABC repair system catalyzes the recognition and processing of DNA lesions. A damage recognition complex composed of 2 UvrA and 2 UvrB subunits scans DNA for abnormalities. Upon binding of the UvrA(2)B(2) complex to a putative damaged site, the DNA wraps around one UvrB monomer. DNA wrap is dependent on ATP binding by UvrB and probably causes local melting of the DNA helix, facilitating insertion of UvrB beta-hairpin between the DNA strands. Then UvrB probes one DNA strand for the presence of a lesion. If a lesion is found the UvrA subunits dissociate and the UvrB-DNA preincision complex is formed. This complex is subsequently bound by UvrC and the second UvrB is released. If no lesion is found, the DNA wraps around the other UvrB subunit that will check the other stand for damage. This Actinobacillus pleuropneumoniae serotype 5b (strain L20) protein is UvrABC system protein B.